Reading from the N-terminus, the 430-residue chain is Chromatin assembly factor 1 p55 subunit (430 aa).

A phosphoserine mark is found at Ser-11 and Ser-100. 6 WD repeats span residues 126–159, 179–210, 229–260, 275–306, 319–350, and 376–407; these read NHEG…FDYT, GHQK…CLWD, GHTA…MIWD, AHTA…ALWD, SHKD…HVWD, and GHTA…QVWQ.

This sequence belongs to the WD repeat RBAP46/RBAP48/MSI1 family. In terms of assembly, probably binds directly to helix 1 of the histone fold of histone H4, a region that is not accessible when H4 is in chromatin. Self associates. Associates with chromatin. Component of the CAF-1 complex, composed of Caf1-55, Caf1-105 and Caf1-180; within the CAF-1 complex, Caf1-180 interacts directly with both Caf1-55 and Caf1-105. Component of the NuRD complex, composed of at least Caf1-55, Mi-2, MTA1-like and HDAC1/Rpd3. Within the NuRD complex, Caf1-55 may interact directly with Mi-2, MTA1-like and HDAC1/Rpd3. The NuRD complex may also associate with the methyl-DNA binding protein MBD-like via Caf1-55 and Mi-2. Component of the NURF complex, composed of Caf1-55, E(bx), Nurf-38 and Iswi. Component of the polycomb repressive complex 2 (PRC2, also known as the Esc/E(Z) complex), composed of Caf1-55, esc, E(z), Su(z)12, and possibly pho. PRC2 associates with the accessory components Jarid2 and jing to form the PRC2 Jarid2-jing variant (PRC2.2). PRC2 may also associate with Pcl and HDAC1/Rpd3 during early embryogenesis. Interacts with Rbf and Rbf2. Component of the DREAM complex at least composed of Myb, Caf1-55, mip40, mip120, mip130, E2f2, Dp, Rbf, Rbf2, lin-52, HDAC1/Rpd3 and l(3)mbt.

It localises to the nucleus. Functionally, core histone-binding subunit that may target chromatin assembly factors, chromatin remodeling factors and histone deacetylases to their histone substrates in a manner that is regulated by nucleosomal DNA. Component of several complexes which regulate chromatin metabolism. These include the chromatin assembly factor 1 (CAF-1) complex, which is required for chromatin assembly following DNA replication and DNA repair; the nucleosome remodeling and deacetylase complex (the NuRD complex), which promotes transcriptional repression by histone deacetylation and nucleosome remodeling; the nucleosome remodeling factor (NURF) complex, which catalyzes ATP-dependent nucleosome sliding and facilitates transcription of chromatin; and the polycomb group (PcG) repressor complex ESC-E(Z), which promotes repression of homeotic genes during development. Also required for transcriptional repression of E2F target genes by E2f2 and Rbf or Rbf2. The sequence is that of Chromatin assembly factor 1 p55 subunit from Drosophila melanogaster (Fruit fly).